The chain runs to 231 residues: MMTTLTARPEAITFDPQQTALIVVDMQNAYATPGGYLDLAGFDVSTTRPVIANIQTAVTAARAAGMLIIWFQNGWDAQYVEAGGPGSPNFHKSNALKTMRKQPQLQGKLLAKGSWDYQLVDELVPQPGDIVLPKPRYSGFFNTPLDSILRSRGIRHLVFTGIATNVCVESTLRDGFFLEYFGVVLEDATHQAGPEFAQKAALFNIETFFGWVSDVETFCDALSPTSFARIA.

The active-site Proton acceptor is the Asp25. Lys134 is a catalytic residue. Cys167 serves as the catalytic Nucleophile.

The protein belongs to the isochorismatase family. RutB subfamily.

The enzyme catalyses (Z)-3-ureidoacrylate + H2O + H(+) = (Z)-3-aminoacrylate + NH4(+) + CO2. It catalyses the reaction (Z)-3-ureidoacrylate + H2O = (Z)-3-aminoacrylate + carbamate + H(+). It carries out the reaction (Z)-2-methylureidoacrylate + H2O + H(+) = (Z)-2-methylaminoacrylate + NH4(+) + CO2. Its function is as follows. Hydrolyzes ureidoacrylate to form aminoacrylate and carbamate. The carbamate hydrolyzes spontaneously, thereby releasing one of the nitrogen atoms of the pyrimidine ring as ammonia and one of its carbon atoms as CO2. This is Ureidoacrylate amidohydrolase RutB from Escherichia coli (strain SMS-3-5 / SECEC).